A 698-amino-acid polypeptide reads, in one-letter code: 4-hydroxybutyrate--CoA ligase [ADP-forming] (698 aa).

Positions 491 to 544 (QEVLKAYGLPLPKSTLAKNEAEAVKAAKKIGYPVVMKIASPQIIHKSDAGGVKV) constitute an ATP-grasp domain. 517–544 (AKKIGYPVVMKIASPQIIHKSDAGGVKV) serves as a coordination point for ATP.

This sequence in the N-terminal section; belongs to the acetate CoA ligase alpha subunit family. The protein in the C-terminal section; belongs to the acetate CoA ligase beta subunit family. The cofactor is Mg(2+). Mn(2+) serves as cofactor.

The catalysed reaction is 4-hydroxybutanoate + ATP + CoA = 4-hydroxybutanoyl-CoA + ADP + phosphate. Involved in thaumarchaeal hydroxypropionate/hydroxybutyrate (HP/HB) cycle, a modified version of the autotrophic HP/HB cycle of Crenarchaeota. Catalyzes the formation of 4-hydroxybutyryl-CoA, ADP and phosphate from 4-hydroxybutyrate, coenzyme A (CoA) and ATP. Can also use acetate, propionate and butyrate, with poor catalytic efficiency. This is 4-hydroxybutyrate--CoA ligase [ADP-forming] from Nitrosopumilus maritimus (strain SCM1).